The following is a 224-amino-acid chain: Zinc finger C4H2 domain-containing protein (224 aa).

Positions 11 to 104 (LESIKEIRNK…RRLHDEYKPL (94 aa)) form a coiled coil. A C4H2-type zinc finger spans residues 189–206 (CLSCHQQIHRNAPICPLC).

As to expression, expressed in fetal tissues, including in brain, intestine, lung, kidney and muscle. Isoform 1 is expressed in numerous fetal brain regions. Isoform 3 is highly expressed in numerous fetal brain regions and spinal cord.

It localises to the cytoplasm. Its subcellular location is the nucleus. The protein localises to the postsynaptic cell membrane. Its function is as follows. Plays a role in interneurons differentiation. Involved in neuronal development and in neuromuscular junction formation. In Homo sapiens (Human), this protein is Zinc finger C4H2 domain-containing protein (ZC4H2).